The chain runs to 84 residues: Large ribosomal subunit protein eL34 (84 aa).

It belongs to the eukaryotic ribosomal protein eL34 family.

The sequence is that of Large ribosomal subunit protein eL34 (ribL34e) from Pyrobaculum aerophilum (strain ATCC 51768 / DSM 7523 / JCM 9630 / CIP 104966 / NBRC 100827 / IM2).